A 412-amino-acid polypeptide reads, in one-letter code: LL-diaminopimelate aminotransferase (412 aa).

Residues Y15 and G42 each contribute to the substrate site. Residues Y72, 108-109, Y132, N187, Y218, and 246-248 contribute to the pyridoxal 5'-phosphate site; these read SK and SFS. Substrate-binding residues include K109, Y132, and N187. Residue K249 is modified to N6-(pyridoxal phosphate)lysine. Pyridoxal 5'-phosphate contacts are provided by R257 and N292. Substrate-binding residues include N292 and R388.

This sequence belongs to the class-I pyridoxal-phosphate-dependent aminotransferase family. LL-diaminopimelate aminotransferase subfamily. As to quaternary structure, homodimer. It depends on pyridoxal 5'-phosphate as a cofactor.

The enzyme catalyses (2S,6S)-2,6-diaminopimelate + 2-oxoglutarate = (S)-2,3,4,5-tetrahydrodipicolinate + L-glutamate + H2O + H(+). It functions in the pathway amino-acid biosynthesis; L-lysine biosynthesis via DAP pathway; LL-2,6-diaminopimelate from (S)-tetrahydrodipicolinate (aminotransferase route): step 1/1. Involved in the synthesis of meso-diaminopimelate (m-DAP or DL-DAP), required for both lysine and peptidoglycan biosynthesis. Catalyzes the direct conversion of tetrahydrodipicolinate to LL-diaminopimelate. The polypeptide is LL-diaminopimelate aminotransferase (Synechocystis sp. (strain ATCC 27184 / PCC 6803 / Kazusa)).